Here is a 194-residue protein sequence, read N- to C-terminus: UPF0232 protein MSMEG_0004/MSMEI_0006 (194 aa).

The span at 1–14 shows a compositional bias: acidic residues; the sequence is MTGPFDDDGPEEDA. Residues 1 to 81 are disordered; the sequence is MTGPFDDDGP…GPGPDARDPQ (81 aa). A compositionally biased stretch (basic and acidic residues) spans 30 to 52; it reads DLVRRTLEEARGAARSQGKDVGR.

The protein belongs to the UPF0232 family.

The chain is UPF0232 protein MSMEG_0004/MSMEI_0006 from Mycolicibacterium smegmatis (strain ATCC 700084 / mc(2)155) (Mycobacterium smegmatis).